The following is a 471-amino-acid chain: Abscisic acid 8'-hydroxylase 1 (471 aa).

A helical membrane pass occupies residues 1-21; that stretch reads MGAFLLFVCVLAPFLLVCAVR. A heme-binding site is contributed by cysteine 415.

It belongs to the cytochrome P450 family. Heme is required as a cofactor. As to expression, in seedlings and expanding leaves.

It localises to the membrane. It catalyses the reaction 2-cis-(+)-abscisate + reduced [NADPH--hemoprotein reductase] + O2 = (+)-8'-hydroxyabscisate + oxidized [NADPH--hemoprotein reductase] + H2O + H(+). Its pathway is plant hormone degradation; abscisic acid degradation. Functionally, involved in the oxidative degradation of abscisic acid. The sequence is that of Abscisic acid 8'-hydroxylase 1 (CYP707A5) from Oryza sativa subsp. indica (Rice).